We begin with the raw amino-acid sequence, 233 residues long: Homeobox protein Hox-D4a (233 aa).

Positions 124–129 (VYPWMK) match the Antp-type hexapeptide motif. The segment at residues 145-204 (PKRSRTAYTRQQVLELEKEFHFNRYLTRRRRIEIAHTLCLSERQIKIWFQNRRMKWTKDH) is a DNA-binding region (homeobox). The disordered stretch occupies residues 203–233 (DHKLPNTKGRSAPASSHLQSIHKDQTDITSL). Residues 223-233 (IHKDQTDITSL) are compositionally biased toward basic and acidic residues.

Belongs to the Antp homeobox family. Deformed subfamily.

Its subcellular location is the nucleus. Its function is as follows. Sequence-specific transcription factor which is part of a developmental regulatory system that provides cells with specific positional identities on the anterior-posterior axis. In Takifugu rubripes (Japanese pufferfish), this protein is Homeobox protein Hox-D4a (hoxd4a).